The following is a 289-amino-acid chain: 33 kDa chaperonin (289 aa).

Cystine bridges form between Cys-230-Cys-232 and Cys-263-Cys-266.

Belongs to the HSP33 family. In terms of processing, under oxidizing conditions two disulfide bonds are formed involving the reactive cysteines. Under reducing conditions zinc is bound to the reactive cysteines and the protein is inactive.

The protein localises to the cytoplasm. In terms of biological role, redox regulated molecular chaperone. Protects both thermally unfolding and oxidatively damaged proteins from irreversible aggregation. Plays an important role in the bacterial defense system toward oxidative stress. The sequence is that of 33 kDa chaperonin from Shigella flexneri serotype 5b (strain 8401).